A 177-amino-acid chain; its full sequence is Transmembrane protein 275 (177 aa).

The disordered stretch occupies residues 1–20 (MPQAKKSTETLAPAPPGRSR). Transmembrane regions (helical) follow at residues 36 to 56 (GLCV…AAFL) and 63 to 83 (LVVG…CCVC). Residues 113–177 (ESSERTAQDT…LNFPRDPAAS (65 aa)) are disordered. Low complexity predominate over residues 128–161 (SPAASAASSGRSSPGPGLFALDPPAPATAAPYLP).

It is found in the membrane. The sequence is that of Transmembrane protein 275 from Mus musculus (Mouse).